Here is a 152-residue protein sequence, read N- to C-terminus: Endoribonuclease YbeY (152 aa).

Zn(2+) is bound by residues His101, His105, and His111. The tract at residues 132–152 is disordered; it reads PSSLIERTTKPAKKAAKRKKR. Positions 141 to 152 are enriched in basic residues; sequence KPAKKAAKRKKR.

It belongs to the endoribonuclease YbeY family. Requires Zn(2+) as cofactor.

The protein resides in the cytoplasm. Its function is as follows. Single strand-specific metallo-endoribonuclease involved in late-stage 70S ribosome quality control and in maturation of the 3' terminus of the 16S rRNA. The sequence is that of Endoribonuclease YbeY from Koribacter versatilis (strain Ellin345).